The primary structure comprises 244 residues: NAD reductase coq12 (244 aa).

Positions 131 to 158 are disordered; that stretch reads NPLMNSEKNSTSVEDLPGSNRTQQTSSH. Polar residues predominate over residues 132 to 158; the sequence is PLMNSEKNSTSVEDLPGSNRTQQTSSH.

It localises to the mitochondrion. It catalyses the reaction a reduced flavin + NAD(+) = an oxidized flavin + NADH + 2 H(+). Functionally, NADH-dependent flavin reductase that acts in the coenzyme Q biosynthetic pathway. Required for synthesis of the p-hydroxybenzoic acid (PHB) precursor to form a quinone backbone. This Schizosaccharomyces pombe (strain 972 / ATCC 24843) (Fission yeast) protein is NAD reductase coq12.